A 64-amino-acid polypeptide reads, in one-letter code: DNA-binding protein 7d (64 aa).

N6-methyllysine occurs at positions 5, 7, 61, 63, and 64.

It belongs to the 7 kDa DNA-binding/endoribonuclease P2 family. Monomer.

Its subcellular location is the cytoplasm. In terms of biological role, can constrain negative DNA supercoils. May be involved in maintaining the integrity of the genome at high temperature. Stimulates the Holliday junction cleavage activity of Hjc. In Saccharolobus solfataricus (strain ATCC 35092 / DSM 1617 / JCM 11322 / P2) (Sulfolobus solfataricus), this protein is DNA-binding protein 7d (sso7d).